Here is a 201-residue protein sequence, read N- to C-terminus: Small ribosomal subunit protein uS4c (201 aa).

A compositionally biased stretch (basic residues) spans 1 to 14 (MSRYRGPRFKKIRR). The interval 1-44 (MSRYRGPRFKKIRRLGALPGLTSKRPRAGSDPRNQSRSGKKSQY) is disordered. Residues 89-152 (MRLDNTLFRL…NSRTLVQNLL (64 aa)) form the S4 RNA-binding domain.

It belongs to the universal ribosomal protein uS4 family. Part of the 30S ribosomal subunit. Contacts protein S5. The interaction surface between S4 and S5 is involved in control of translational fidelity.

It is found in the plastid. It localises to the chloroplast. Its function is as follows. One of the primary rRNA binding proteins, it binds directly to 16S rRNA where it nucleates assembly of the body of the 30S subunit. Functionally, with S5 and S12 plays an important role in translational accuracy. In Draba nemorosa (Woodland whitlowgrass), this protein is Small ribosomal subunit protein uS4c (rps4).